We begin with the raw amino-acid sequence, 231 residues long: NADH-ubiquinone oxidoreductase chain 4 (231 aa).

Transmembrane regions (helical) follow at residues 1–21 (PIAG…YGII), 34–54 (MFLP…LTCL), 63–85 (IAYS…TPWG), 89–111 (AMAL…NTTY), 128–148 (ILPM…AIPP), and 169–189 (TIIL…HMLL).

Belongs to the complex I subunit 4 family.

The protein resides in the mitochondrion membrane. It carries out the reaction a ubiquinone + NADH + 5 H(+)(in) = a ubiquinol + NAD(+) + 4 H(+)(out). Its function is as follows. Core subunit of the mitochondrial membrane respiratory chain NADH dehydrogenase (Complex I) that is believed to belong to the minimal assembly required for catalysis. Complex I functions in the transfer of electrons from NADH to the respiratory chain. The immediate electron acceptor for the enzyme is believed to be ubiquinone. This is NADH-ubiquinone oxidoreductase chain 4 (MT-ND4) from Bothrops bilineatus (Green jararaca).